The following is a 276-amino-acid chain: Large ribosomal subunit protein uL2 (276 aa).

Positions 219–276 (TVRGSVMNPNDHPHGGGEGRSPIGRPSPVTPWGKPALGYKTRKKNKASNKLIVSRRTK) are disordered. Residues 258 to 276 (KTRKKNKASNKLIVSRRTK) show a composition bias toward basic residues.

The protein belongs to the universal ribosomal protein uL2 family. In terms of assembly, part of the 50S ribosomal subunit. Forms a bridge to the 30S subunit in the 70S ribosome.

Its function is as follows. One of the primary rRNA binding proteins. Required for association of the 30S and 50S subunits to form the 70S ribosome, for tRNA binding and peptide bond formation. It has been suggested to have peptidyltransferase activity; this is somewhat controversial. Makes several contacts with the 16S rRNA in the 70S ribosome. In Clostridioides difficile (strain 630) (Peptoclostridium difficile), this protein is Large ribosomal subunit protein uL2.